Reading from the N-terminus, the 145-residue chain is Basic phospholipase A2 BFPA (145 aa).

Residues 1-27 (MNPAHLLVLLAVCVSLLGAANIPPQSL) form the signal peptide. 7 disulfides stabilise this stretch: Cys-38-Cys-97, Cys-52-Cys-144, Cys-54-Cys-70, Cys-69-Cys-125, Cys-76-Cys-118, Cys-86-Cys-111, and Cys-104-Cys-116. Ca(2+) contacts are provided by Tyr-53, Gly-55, and Gly-57. His-73 is a catalytic residue. Asp-74 is a Ca(2+) binding site. Residue Asp-119 is part of the active site.

The protein belongs to the phospholipase A2 family. Group I subfamily. D49 sub-subfamily. In terms of assembly, homodimer; disulfide-linked. Ca(2+) serves as cofactor. As to expression, expressed by the venom gland.

It is found in the secreted. The enzyme catalyses a 1,2-diacyl-sn-glycero-3-phosphocholine + H2O = a 1-acyl-sn-glycero-3-phosphocholine + a fatty acid + H(+). Snake venom phospholipase A2 (PLA2) that inhibits blood coagulation and shows bactericidal activities against both Gram-negative and -positive bacteria (E.coli, MIC=0.4 uM and S.aureus, MIC=0.1 uM). PLA2 catalyzes the calcium-dependent hydrolysis of the 2-acyl groups in 3-sn-phosphoglycerides. This Bungarus fasciatus (Banded krait) protein is Basic phospholipase A2 BFPA.